Here is a 235-residue protein sequence, read N- to C-terminus: MVCALHAVPAHHRRVVTPAGDDPSGPAGSGDRAVAAAAERAKLTAGRNIPSFDDLPLPADTANLREGANLSDALLALLPLVGVWRGEGEGRGHDGDYRFGQQIVVSHDGGDYLNWEARSWRLNDTGDYQERGLRETGFWRFVRDPDDPSESQAIELLLAHSAGYVELFYGRPRTQSSWELVTDALARSRSGVLVGGAKRLYGIVEGGDLAYVEERVDADGGLVPHLSARLSRFAG.

Positions Gly82 to Gly88 match the GXWXGXG motif. Lys198 and His225 together coordinate heme b.

This sequence belongs to the nitrobindin family. Homodimer. Requires heme b as cofactor.

The enzyme catalyses peroxynitrite = nitrate. It functions in the pathway nitrogen metabolism. In terms of biological role, heme-binding protein able to scavenge peroxynitrite and to protect free L-tyrosine against peroxynitrite-mediated nitration, by acting as a peroxynitrite isomerase that converts peroxynitrite to nitrate. Therefore, this protein likely plays a role in peroxynitrite sensing and in the detoxification of reactive nitrogen and oxygen species (RNS and ROS, respectively). Is able to bind nitric oxide (NO) in vitro, but may act as a sensor of peroxynitrite levels in vivo. The chain is Peroxynitrite isomerase 2 from Mycolicibacterium paratuberculosis (strain ATCC BAA-968 / K-10) (Mycobacterium paratuberculosis).